The chain runs to 103 residues: Small ribosomal subunit protein uS10 (103 aa).

Belongs to the universal ribosomal protein uS10 family. As to quaternary structure, part of the 30S ribosomal subunit.

Its function is as follows. Involved in the binding of tRNA to the ribosomes. The sequence is that of Small ribosomal subunit protein uS10 from Campylobacter jejuni subsp. jejuni serotype O:6 (strain 81116 / NCTC 11828).